The sequence spans 721 residues: Polyribonucleotide nucleotidyltransferase (721 aa).

Mg(2+)-binding residues include Asp495 and Asp501. Residues 562 to 621 (PRLLSFRIDPELIGTVIGPGGRTIKGITERTNTKIDIEDSGIVTIASHDGAAAEEAQKII) enclose the KH domain. One can recognise an S1 motif domain in the interval 631–699 (GEMFSGSITR…NRGRINLTLR (69 aa)). Residues 700–721 (GVPQSGESTEVEPQPTPVAPLS) form a disordered region.

This sequence belongs to the polyribonucleotide nucleotidyltransferase family. Mg(2+) is required as a cofactor.

The protein resides in the cytoplasm. The enzyme catalyses RNA(n+1) + phosphate = RNA(n) + a ribonucleoside 5'-diphosphate. In terms of biological role, involved in mRNA degradation. Catalyzes the phosphorolysis of single-stranded polyribonucleotides processively in the 3'- to 5'-direction. The chain is Polyribonucleotide nucleotidyltransferase from Synechococcus sp. (strain CC9902).